The chain runs to 293 residues: Pyridoxal 5'-phosphate synthase subunit PdxS (293 aa).

Residue Asp23 coordinates D-ribose 5-phosphate. Residue Lys80 is the Schiff-base intermediate with D-ribose 5-phosphate of the active site. Gly152 provides a ligand contact to D-ribose 5-phosphate. Arg164 provides a ligand contact to D-glyceraldehyde 3-phosphate. D-ribose 5-phosphate is bound by residues Gly213 and 234–235 (GS).

It belongs to the PdxS/SNZ family. In terms of assembly, in the presence of PdxT, forms a dodecamer of heterodimers.

The enzyme catalyses aldehydo-D-ribose 5-phosphate + D-glyceraldehyde 3-phosphate + L-glutamine = pyridoxal 5'-phosphate + L-glutamate + phosphate + 3 H2O + H(+). It functions in the pathway cofactor biosynthesis; pyridoxal 5'-phosphate biosynthesis. In terms of biological role, catalyzes the formation of pyridoxal 5'-phosphate from ribose 5-phosphate (RBP), glyceraldehyde 3-phosphate (G3P) and ammonia. The ammonia is provided by the PdxT subunit. Can also use ribulose 5-phosphate and dihydroxyacetone phosphate as substrates, resulting from enzyme-catalyzed isomerization of RBP and G3P, respectively. This chain is Pyridoxal 5'-phosphate synthase subunit PdxS, found in Dehalococcoides mccartyi (strain ATCC BAA-2266 / KCTC 15142 / 195) (Dehalococcoides ethenogenes (strain 195)).